A 682-amino-acid polypeptide reads, in one-letter code: MSRKQLALFEPTLVVQALKEAVKKLNPQAQWRNPVMFIVWIGSLLTTCISIAMASGAMPGNALFSAAISGWLWVTVLFANFAEALAEGRSKAQANSLKGVKKTAFARKLREPKYGAAADKVPADQLRKGDIVLVEAGDIIPCDGEVIEGGASVDESAITGESAPVIRESGGDFASVTGGTRILSDWLVIECSVNPGETFLDRMIAMVEGAQRRKTPNEIALTILLIALTIVFLLATATLWPFSAWGGNAVSVTVLVALLVCLIPTTIGGLLSAIGVAGMSRMLGANVIATSGRAVEAAGDVDVLLLDKTGTITLGNRQASEFIPAQGVDEKTLADAAQLASLADETPEGRSIVILAKQRFNLRERDVQSLHATFVPFTAQSRMSGINIDNRMIRKGSVDAIRRHIEANGGHFPADVDQKVDQVARQGATPLVVVEGSRVLGVIALKDIVKGGIKERFAQLRKMGIKTVMITGDNRLTAAAIAAEAGVDDFLAEATPEAKLALIRQYQAEGRLVAMTGDGTNDAPALAQADVAVAMNSGTQAAKEAGNMVDLDSNPTKLIEVVHIGKQMLMTRGSLTTFSIANDVAKYFAIIPAAFAATYPQLNALNIMRLHSPDSAILSAVIFNALIIVFLIPLALKGVSYKPLTASAMLRRNLWIYGLGGLLVPFIGIKVIDLLLTVCGLV.

4 consecutive transmembrane segments (helical) span residues 34–54 (PVMFIVWIGSLLTTCISIAMA), 62–82 (ALFSAAISGWLWVTVLFANFA), 219–239 (IALTILLIALTIVFLLATATL), and 254–274 (VLVALLVCLIPTTIGGLLSAI). Residue aspartate 307 is the 4-aspartylphosphate intermediate of the active site. Residues aspartate 344, glutamate 348, 377–384 (FTAQSRMS), and lysine 395 contribute to the ATP site. Aspartate 518 and aspartate 522 together coordinate Mg(2+). The next 3 membrane-spanning stretches (helical) occupy residues 588–608 (FAIIPAAFAATYPQLNALNIM), 616–636 (AILSAVIFNALIIVFLIPLAL), and 656–676 (IYGLGGLLVPFIGIKVIDLLL).

It belongs to the cation transport ATPase (P-type) (TC 3.A.3) family. Type IA subfamily. The system is composed of three essential subunits: KdpA, KdpB and KdpC.

The protein localises to the cell inner membrane. It carries out the reaction K(+)(out) + ATP + H2O = K(+)(in) + ADP + phosphate + H(+). Part of the high-affinity ATP-driven potassium transport (or Kdp) system, which catalyzes the hydrolysis of ATP coupled with the electrogenic transport of potassium into the cytoplasm. This subunit is responsible for energy coupling to the transport system and for the release of the potassium ions to the cytoplasm. The sequence is that of Potassium-transporting ATPase ATP-binding subunit from Shigella sonnei (strain Ss046).